Consider the following 545-residue polypeptide: CTP synthase (545 aa).

Residues 1-266 form an amidoligase domain region; sequence MTTNYIFVTG…DDYICKRFSL (266 aa). Position 14 (serine 14) interacts with CTP. Serine 14 lines the UTP pocket. ATP-binding positions include 15-20 and aspartate 72; that span reads SLGKGI. Mg(2+) is bound by residues aspartate 72 and glutamate 140. CTP-binding positions include 147–149, 187–192, and lysine 223; these read DIE and KTKPTQ. Residues 187–192 and lysine 223 contribute to the UTP site; that span reads KTKPTQ. 239 to 241 provides a ligand contact to ATP; that stretch reads KDI. The Glutamine amidotransferase type-1 domain maps to 291-542; that stretch reads TIGMVGKYVA…VKAAGAYQKR (252 aa). L-glutamine is bound at residue glycine 352. Cysteine 379 acts as the Nucleophile; for glutamine hydrolysis in catalysis. L-glutamine contacts are provided by residues 380–383, glutamate 403, and arginine 470; that span reads LGMQ. Residues histidine 515 and glutamate 517 contribute to the active site.

It belongs to the CTP synthase family. Homotetramer.

It catalyses the reaction UTP + L-glutamine + ATP + H2O = CTP + L-glutamate + ADP + phosphate + 2 H(+). The enzyme catalyses L-glutamine + H2O = L-glutamate + NH4(+). The catalysed reaction is UTP + NH4(+) + ATP = CTP + ADP + phosphate + 2 H(+). Its pathway is pyrimidine metabolism; CTP biosynthesis via de novo pathway; CTP from UDP: step 2/2. Allosterically activated by GTP, when glutamine is the substrate; GTP has no effect on the reaction when ammonia is the substrate. The allosteric effector GTP functions by stabilizing the protein conformation that binds the tetrahedral intermediate(s) formed during glutamine hydrolysis. Inhibited by the product CTP, via allosteric rather than competitive inhibition. In terms of biological role, catalyzes the ATP-dependent amination of UTP to CTP with either L-glutamine or ammonia as the source of nitrogen. Regulates intracellular CTP levels through interactions with the four ribonucleotide triphosphates. The sequence is that of CTP synthase from Pectobacterium atrosepticum (strain SCRI 1043 / ATCC BAA-672) (Erwinia carotovora subsp. atroseptica).